The primary structure comprises 750 residues: uncharacterized protein (750 aa).

A run of 5 helical transmembrane segments spans residues 2-22, 33-53, 79-99, 116-136, and 143-163; these read FVLL…TNVI, SLIL…DIFI, LLVL…VVSL, LSIF…TIML, and IQSL…SPIA. 2 disordered regions span residues 385–461 and 571–651; these read DNKG…KKKE and NKEF…PLTA. Over residues 398 to 411 the composition is skewed to basic and acidic residues; the sequence is ENTKGDDNSSEKTD. Residues 412-424 show a composition bias toward polar residues; that stretch reads TVSVSTKLKTTAD. Residues 425–436 show a composition bias toward low complexity; it reads QSESTQMSSEST. The span at 437-451 shows a compositional bias: polar residues; sequence ATGISSDPQSQGKMN. Residues 452-461 show a composition bias toward basic and acidic residues; that stretch reads NKSEEQKKKE. Positions 618–629 are enriched in polar residues; it reads DSKGNTATNSDT. A helical membrane pass occupies residues 724–744; sequence ATIVITLFLTVVLLAIAFFFF.

It to M.pneumoniae MPN_335.

The protein resides in the cell membrane. This is an uncharacterized protein from Mycoplasma pneumoniae (strain ATCC 29342 / M129 / Subtype 1) (Mycoplasmoides pneumoniae).